Consider the following 707-residue polypeptide: Ribosomal RNA large subunit methyltransferase K/L (707 aa).

The region spanning 44–155 (VIYNLCLWSR…NDILTVSFDL (112 aa)) is the THUMP domain.

Belongs to the methyltransferase superfamily. RlmKL family.

The protein localises to the cytoplasm. The catalysed reaction is guanosine(2445) in 23S rRNA + S-adenosyl-L-methionine = N(2)-methylguanosine(2445) in 23S rRNA + S-adenosyl-L-homocysteine + H(+). The enzyme catalyses guanosine(2069) in 23S rRNA + S-adenosyl-L-methionine = N(2)-methylguanosine(2069) in 23S rRNA + S-adenosyl-L-homocysteine + H(+). In terms of biological role, specifically methylates the guanine in position 2445 (m2G2445) and the guanine in position 2069 (m7G2069) of 23S rRNA. This is Ribosomal RNA large subunit methyltransferase K/L from Legionella pneumophila (strain Corby).